The primary structure comprises 429 residues: Zinc finger protein 385C (429 aa).

The Matrin-type 1 zinc finger occupies Ile77 to Ala107. Disordered stretches follow at residues Glu109–Glu224, Gly258–Pro295, and Gln311–Gln340. Low complexity predominate over residues Thr125–Pro146. Pro residues predominate over residues Ala147–Asp162. A compositionally biased stretch (low complexity) spans Cys181 to Pro193. Residues Lys225–His259 form a Matrin-type 2 zinc finger. Basic residues predominate over residues Ala262–Ile284. The Matrin-type 3 zinc-finger motif lies at Phe297–Gly327.

Its subcellular location is the nucleus. The polypeptide is Zinc finger protein 385C (Mus musculus (Mouse)).